A 500-amino-acid chain; its full sequence is Glutamate--tRNA ligase (500 aa).

Residues 12 to 22 carry the 'HIGH' region motif; sequence PSPTGHLHIGN. A 'KMSKS' region motif is present at residues 259 to 263; it reads KLSKR. Lysine 262 is a binding site for ATP.

Belongs to the class-I aminoacyl-tRNA synthetase family. Glutamate--tRNA ligase type 1 subfamily. As to quaternary structure, monomer.

Its subcellular location is the cytoplasm. The enzyme catalyses tRNA(Glu) + L-glutamate + ATP = L-glutamyl-tRNA(Glu) + AMP + diphosphate. In terms of biological role, catalyzes the attachment of glutamate to tRNA(Glu) in a two-step reaction: glutamate is first activated by ATP to form Glu-AMP and then transferred to the acceptor end of tRNA(Glu). This chain is Glutamate--tRNA ligase, found in Lactobacillus delbrueckii subsp. bulgaricus.